The chain runs to 294 residues: Probable WRKY transcription factor 70 (294 aa).

The segment at 72–94 (SQNASCDNDGKFEDSGDSRKRLG) is disordered. Residues 79 to 91 (NDGKFEDSGDSRK) are compositionally biased toward basic and acidic residues. The short motif at 90 to 97 (RKRLGPVK) is the Nuclear localization signal element. A DNA-binding region (WRKY) is located at residues 114 to 182 (IESTILEDAF…YIGNHTCNTN (69 aa)). Residues 201–229 (SEDHKSPSLSTSMKEEDNPHRHHGSSTEN) are disordered.

It belongs to the WRKY group III family. In terms of assembly, interacts with WRKY30. Binds to BZR2/BES1 to cooperatively regulate the expression of target genes. Binds to unmodified (i.e. not sumoylated) NPR1. In terms of processing, phosphorylated and destabilized by ASK7/BIN2. In terms of tissue distribution, expressed in leaves and flowers.

The protein localises to the nucleus. Functionally, transcription factor involved in senescence, biotic and abiotic stress responses by modulating various phytohormones signaling pathways. Interacts specifically with the W box (5'-(T)TGAC[CT]-3'), a frequently occurring elicitor-responsive cis-acting element. Binds to the 5'-[CT]GACTTTT-3' motif in promoters of target genes to induce their expression. Binding to the W-box element of PR-1 promoter is mediated by not-sumoylated NPR1 in the absence of salicylic acid. Plays an important but not indispensable role in jasmonate and salicylic acid signaling. Positively regulates the salicylic acid (SA)-mediated signal pathway, but negatively the jasmonic acid (JA)-mediated signal pathway, thus determining the balance between these mutually antagonistic pathways. Together with WRKY46, WRKY53 and WRKY54, prevents defense response to the necrotrophic pathogens P.carotovorum and B.cinerea, but promotes defense responses (including SA-induced pathogenesis-related (PR) genes expression) against biotrophic/hemibiotrophic SA-monitored pathogens (e.g. P.syringae, E.carotovora subsp. carotovora SCC3193 and E.cichoracearum), probably by regulating negatively the JA/ET and positively the SA signaling pathways. Contributes to the suppression of jasmonic acid (MeJA)-induced expression of JA-responsive genes (e.g. PDF1.2). Promotes susceptibility to JA-monitored pathogens (e.g. A.brassicicola), probably by facilitating SA-controlled suppression of JA-mediated defense. Represses the biosynthesis of the phytoalexin camalexin and indol-3-ylmethyl glucosinolate (IGS). Represses both SA and JA/ethylene (ET) mediated defense marker genes expression. Negative regulator of SA biosynthesis. Negative regulator of EDS1-dependent defense against E.amylovora. Required for RPP4-mediated disease resistance and basal defense against H.parasitica, probably via late up-regulation (LURP) of resistance genes (e.g. CML10/CaBP22 and LURP1). Probably involved in defense responses toward insects (e.g. P.xylostella and B.brassicae). Together with WRKY54, negative regulator of developmental senescence, probably via the regulation of several senescence-associated markers genes. Together with WRKY46 and WRKY54, promotes brassinosteroid (BR)-regulated plant growth but prevent drought response by modulating gene expression. In collaboration with WRKY54, prevents stomatal closure and, consequently, osmotic stress tolerance. Regulates rhizobacterium B.cereus AR156-induced systemic resistance (ISR) to P.syringae pv. tomato DC3000. In Arabidopsis thaliana (Mouse-ear cress), this protein is Probable WRKY transcription factor 70.